The sequence spans 300 residues: uncharacterized protein (300 aa).

The protein belongs to the histone deacetylase family.

Putative deacetylase. This is an uncharacterized protein from Picosynechococcus sp. (strain ATCC 27264 / PCC 7002 / PR-6) (Agmenellum quadruplicatum).